The following is a 173-amino-acid chain: Shikimate kinase (173 aa).

12-17 (GSGKTT) lines the ATP pocket. Threonine 16 provides a ligand contact to Mg(2+). Residues aspartate 34, arginine 58, and glycine 80 each contribute to the substrate site. Arginine 118 is an ATP binding site. Substrate is bound at residue arginine 136.

It belongs to the shikimate kinase family. Monomer. Mg(2+) is required as a cofactor.

Its subcellular location is the cytoplasm. It carries out the reaction shikimate + ATP = 3-phosphoshikimate + ADP + H(+). Its pathway is metabolic intermediate biosynthesis; chorismate biosynthesis; chorismate from D-erythrose 4-phosphate and phosphoenolpyruvate: step 5/7. Functionally, catalyzes the specific phosphorylation of the 3-hydroxyl group of shikimic acid using ATP as a cosubstrate. This Moorella thermoacetica (strain ATCC 39073 / JCM 9320) protein is Shikimate kinase.